The sequence spans 321 residues: MKFVATLIACGLSGLALAAPTATVDSLGKRAADDAAFGYASLNGGTTGGAGGTTTTVSSYAAFTAAVSSDAKKVVYVSGPIKQSAKQVKVGSNTSIIGKDSTAVLEGFGLLVKEKSNVIIRNLGVKKVLAENGDAIGIQYSNNVWVDHVDVSSDRDHDKDYYDGLIDVTHAADYVTISNSYIHDHWKASLVGHSDNNGDEDKGHLRVTYANNYWSNINSRAPSLRFGTGHIYNSYFENVSDGINTRDGAQVLVESNQFVGSSKALYSTDDGYAVERDNDFGGAKNTALQGTLTTVPYSYSLLGSSKVKSAVVGVAGQTLKF.

Residues 1–18 (MKFVATLIACGLSGLALA) form the signal peptide. The N-linked (GlcNAc...) asparagine glycan is linked to N93. 3 residues coordinate Ca(2+): D134, D163, and D167. R220 is a catalytic residue. N-linked (GlcNAc...) asparagine glycosylation is present at N238.

Belongs to the polysaccharide lyase 1 family. The cofactor is Ca(2+).

The protein localises to the secreted. The catalysed reaction is Eliminative cleavage of (1-&gt;4)-alpha-D-galacturonan to give oligosaccharides with 4-deoxy-alpha-D-galact-4-enuronosyl groups at their non-reducing ends.. Its function is as follows. Pectinolytic enzyme consist of four classes of enzymes: pectin lyase, polygalacturonase, pectin methylesterase and rhamnogalacturonase. Among pectinolytic enzymes, pectin lyase is the most important in depolymerization of pectin, since it cleaves internal glycosidic bonds of highly methylated pectins. Favors pectate, the anion, over pectin, the methyl ester. The protein is Probable pectate lyase A (plyA) of Aspergillus fumigatus (strain CBS 144.89 / FGSC A1163 / CEA10) (Neosartorya fumigata).